A 259-amino-acid polypeptide reads, in one-letter code: Global transcriptional regulator CodY (259 aa).

The tract at residues 1-155 (MNLLQKTRKI…GATVVGMEIL (155 aa)) is GAF domain. The H-T-H motif DNA-binding region spans 203–222 (ASKIADRVGITRSVIVNALR). Ser215 carries the phosphoserine modification.

Belongs to the CodY family.

Its subcellular location is the cytoplasm. In terms of biological role, DNA-binding global transcriptional regulator which is involved in the adaptive response to starvation and acts by directly or indirectly controlling the expression of numerous genes in response to nutrient availability. During rapid exponential growth, CodY is highly active and represses genes whose products allow adaptation to nutrient depletion. This is Global transcriptional regulator CodY from Geobacillus sp. (strain WCH70).